Here is a 720-residue protein sequence, read N- to C-terminus: 1,4-alpha-glucan branching enzyme GlgB (720 aa).

D400 functions as the Nucleophile in the catalytic mechanism. The active-site Proton donor is E453.

This sequence belongs to the glycosyl hydrolase 13 family. GlgB subfamily. As to quaternary structure, monomer.

The catalysed reaction is Transfers a segment of a (1-&gt;4)-alpha-D-glucan chain to a primary hydroxy group in a similar glucan chain.. It functions in the pathway glycan biosynthesis; glycogen biosynthesis. Its function is as follows. Catalyzes the formation of the alpha-1,6-glucosidic linkages in glycogen by scission of a 1,4-alpha-linked oligosaccharide from growing alpha-1,4-glucan chains and the subsequent attachment of the oligosaccharide to the alpha-1,6 position. This Chlamydia pneumoniae (Chlamydophila pneumoniae) protein is 1,4-alpha-glucan branching enzyme GlgB.